We begin with the raw amino-acid sequence, 1033 residues long: Tyrosine-protein kinase-like otk (1033 aa).

The signal sequence occupies residues Met-1–Ala-22. Over Ser-23–Ala-581 the chain is Extracellular. 5 consecutive Ig-like C2-type domains span residues Ser-25–Ser-114, Leu-113–Ser-199, Pro-251–Asn-365, Pro-368–Asn-463, and Pro-468–Val-558. Residue Asn-39 is glycosylated (N-linked (GlcNAc...) asparagine). 4 cysteine pairs are disulfide-bonded: Cys-46–Cys-95, Cys-137–Cys-188, Cys-276–Cys-354, and Cys-399–Cys-447. Residues Asn-336, Asn-417, Asn-429, Asn-444, Asn-457, Asn-512, and Asn-524 are each glycosylated (N-linked (GlcNAc...) asparagine). A disulfide bond links Cys-490 and Cys-542. Residues Val-582–Trp-602 traverse the membrane as a helical segment. At Cys-603–Lys-1033 the chain is on the cytoplasmic side. 2 disordered regions span residues Leu-617–Ala-679 and Ser-718–Met-760. A compositionally biased stretch (polar residues) spans Lys-655–Arg-673. Ser-678 carries the post-translational modification Phosphoserine. The 337-residue stretch at Leu-692–Met-1028 folds into the Protein kinase; inactive domain. The segment covering Ser-720–Ser-731 has biased composition (basic and acidic residues).

Belongs to the protein kinase superfamily. Tyr protein kinase family. Insulin receptor subfamily. In terms of assembly, interacts with plexA; component of a receptor complex that mediates the repulsive signaling in response to Semaphorin ligands. As to expression, dynamically expressed during embryogenesis in several areas of the developing nervous system, including neurons and fasciculating axons. Expression in stage 7 embryos is seen in the anterior midgut primordia, cephalic furrow and along the germinal band. At stage 11, expression is in 15 stripes over the trunk region, and in the anterior and posterior midgut primordia. Stage 12 shows expression in the developing nervous system, procephalic lobe and maxillar bud. Stage 13 shows expression in the ventral cord, maxillar segment and in three regions of the gut. At stage 16 expression is preferentially detected throughout the nervous system, including the neuromers in the ventral cord and the supraesophageal ganglion (at protein level). In larva, expression is seen in developing R cells and is localized predominantly to R1-R6 growth cones.

Its subcellular location is the cell membrane. Functionally, acts as a calcium-dependent, homophilic cell adhesion molecule that regulates neural recognition during the development of the nervous system. Component of the repulsive Plexin signaling response to regulate motor axon guidance at the embryonic stage. Also component of a receptor complex that is required in the adult visual system to innervate the lamina layer; specific targeting of R1-R6 axons. The chain is Tyrosine-protein kinase-like otk from Drosophila melanogaster (Fruit fly).